Here is a 132-residue protein sequence, read N- to C-terminus: Fumarate reductase subunit C (132 aa).

Helical transmembrane passes span 30–50, 70–90, and 110–130; these read ATSVFAVWFCIVLLYGVLCFA, IVVFLNIITLIATLYHTVTYF, and VVRNALWAVTALVSVIALVLV.

The protein belongs to the FrdC family. Part of an enzyme complex containing four subunits: a flavoprotein (FrdA), an iron-sulfur protein (FrdB), and two hydrophobic anchor proteins (FrdC and FrdD).

The protein localises to the cell inner membrane. Functionally, anchors the catalytic components of the fumarate reductase complex to the cell membrane, binds quinones. The protein is Fumarate reductase subunit C of Haemophilus influenzae (strain ATCC 51907 / DSM 11121 / KW20 / Rd).